The following is a 1342-amino-acid chain: DNA-directed RNA polymerase subunit beta (1342 aa).

It belongs to the RNA polymerase beta chain family. As to quaternary structure, the RNAP catalytic core consists of 2 alpha, 1 beta, 1 beta' and 1 omega subunit. When a sigma factor is associated with the core the holoenzyme is formed, which can initiate transcription.

It carries out the reaction RNA(n) + a ribonucleoside 5'-triphosphate = RNA(n+1) + diphosphate. Functionally, DNA-dependent RNA polymerase catalyzes the transcription of DNA into RNA using the four ribonucleoside triphosphates as substrates. The polypeptide is DNA-directed RNA polymerase subunit beta (Yersinia pestis bv. Antiqua (strain Angola)).